We begin with the raw amino-acid sequence, 77 residues long: U8-lycotoxin-Ls1m (77 aa).

Residues 1–20 (MKLIIFTGLVLFSIVSLIEA) form the signal peptide. Positions 21-26 (QAENEK) are excised as a propeptide.

It belongs to the neurotoxin 19 (CSTX) family. 08 (U8-Lctx) subfamily. Contains 4 disulfide bonds. As to expression, expressed by the venom gland.

Its subcellular location is the secreted. This chain is U8-lycotoxin-Ls1m, found in Lycosa singoriensis (Wolf spider).